A 1301-amino-acid polypeptide reads, in one-letter code: Dentin sialophosphoprotein (1301 aa).

Positions 1 to 15 (MKIITYFCIWAVAWA) are cleaved as a signal peptide. N-linked (GlcNAc...) asparagine glycosylation is found at N41 and N49. Residues 55–89 (KESGVLVHEGDRGRQENTQDGHKGEGNGSKWAEVG) are disordered. Over residues 62 to 79 (HEGDRGRQENTQDGHKGE) the composition is skewed to basic and acidic residues. N-linked (GlcNAc...) asparagine glycosylation is found at N81, N130, N150, N190, N191, N209, and N222. Over residues 146 to 165 (AGATNRSNTNGNTDKNTQNG) the composition is skewed to polar residues. The disordered stretch occupies residues 146–171 (AGATNRSNTNGNTDKNTQNGDVGDAG). Positions 202–1301 (NSCRNEGNTS…SDSNHSTSDD (1100 aa)) are disordered. A compositionally biased stretch (polar residues) spans 203–221 (SCRNEGNTSEITPQINSKR). Over residues 251–267 (ADEDEDEGSGDDEDEEA) the composition is skewed to acidic residues. The residue at position 259 (S259) is a Phosphoserine; by CK1. Over residues 271-280 (KDSSNNSKGQ) the composition is skewed to polar residues. The N-linked (GlcNAc...) asparagine glycan is linked to N275. Basic and acidic residues-rich tracts occupy residues 281-293 (EGQD…DHDS) and 300-327 (DSKE…KSEE). Position 301 is a phosphoserine (S301). N-linked (GlcNAc...) asparagine glycosylation occurs at N336. The span at 340–377 (RIEDTQKLNHRESKRVENRITKESETHAVGKSQDKGIE) shows a compositional bias: basic and acidic residues. N387 is a glycosylation site (N-linked (GlcNAc...) asparagine). The span at 388–404 (ITKEVGKGNEGKEDKGQ) shows a compositional bias: basic and acidic residues. 2 stretches are compositionally biased toward low complexity: residues 439-452 (SNTG…GYDS) and 462-487 (GDDP…NSSS). The Cell attachment site signature appears at 488–490 (RGD). Polar residues predominate over residues 488–506 (RGDASYNSDESKDNGNGSD). The span at 518–534 (TSDTNNSDSNGNGNNGN) shows a compositional bias: low complexity. The span at 536–549 (DNDKSDSGKGKSDS) shows a compositional bias: basic and acidic residues. The segment covering 555–564 (SDSSNSSDSS) has biased composition (low complexity). Residues 581–595 (DSSDSDSSDSSDSDS) are compositionally biased toward acidic residues. Low complexity predominate over residues 596–619 (SDSSNSSDSSDSSDSSDSSDSSDS). The segment covering 620–642 (SDSKSDSSKSESDSSDSDSKSDS) has biased composition (basic and acidic residues). Composition is skewed to low complexity over residues 643–705 (SDSN…SDSS), 715–1264 (SSDS…STSD), 1272–1284 (QSKS…NGSD), and 1292–1301 (SDSNHSTSDD).

As to quaternary structure, interacts with FBLN7. In terms of processing, DSP is glycosylated. In terms of tissue distribution, expressed in teeth. DPP is synthesized by odontoblast and transiently expressed by pre-ameloblasts.

It localises to the secreted. It is found in the extracellular space. The protein localises to the extracellular matrix. Functionally, DSP may be an important factor in dentinogenesis. DPP may bind high amount of calcium and facilitate initial mineralization of dentin matrix collagen as well as regulate the size and shape of the crystals. This is Dentin sialophosphoprotein (DSPP) from Homo sapiens (Human).